Here is a 465-residue protein sequence, read N- to C-terminus: Na(+)-translocating NADH-quinone reductase subunit A (465 aa).

The protein belongs to the NqrA family. In terms of assembly, composed of six subunits; NqrA, NqrB, NqrC, NqrD, NqrE and NqrF.

It catalyses the reaction a ubiquinone + n Na(+)(in) + NADH + H(+) = a ubiquinol + n Na(+)(out) + NAD(+). NQR complex catalyzes the reduction of ubiquinone-1 to ubiquinol by two successive reactions, coupled with the transport of Na(+) ions from the cytoplasm to the periplasm. NqrA to NqrE are probably involved in the second step, the conversion of ubisemiquinone to ubiquinol. The chain is Na(+)-translocating NADH-quinone reductase subunit A from Chlamydia trachomatis serovar L2 (strain ATCC VR-902B / DSM 19102 / 434/Bu).